A 230-amino-acid polypeptide reads, in one-letter code: uncharacterized protein (230 aa).

Positions L118–R195 are disordered. A compositionally biased stretch (basic residues) spans Q136–K146. Composition is skewed to basic and acidic residues over residues E160–F170 and Q179–R195.

This is an uncharacterized protein from Schizosaccharomyces pombe (strain 972 / ATCC 24843) (Fission yeast).